We begin with the raw amino-acid sequence, 340 residues long: MNDLDSLRQEAERLKNTIRDARKNALDTTLVQATAGMDPIGRIQMRTRRTLRGHLAKIYAMHWGSDSRNLVSASQDGKLIVWDSYTTNKVHAIPLRSSWVMTCAYAPSGSYVACGGLDNICSIYSLKTREGNVRVSRELPGHTGYLSCCRFVDDNQIVTSSGDMTCALWDIETGQQCTQFTGHTGDVMSLSLSPNMRTFTSGACDASAKLWDIRDGMCRQTFPGHESDINAVTFFPNGHAFATGSDDATCRLFDIRADQELAMYSHDNIICGITSVAFSKSGKLLLAGYDDFNCNVWDSMRTERAGVLAGHDNRVSCLGVTEDGMAVATGSWDSFLKIWN.

WD repeat units lie at residues 53-83 (GHLA…IVWD), 95-125 (LRSS…SIYS), 141-170 (GHTG…ALWD), 182-212 (GHTG…KLWD), 224-254 (GHES…RLFD), 268-298 (NIIC…NVWD), and 310-340 (GHDN…KIWN).

Belongs to the WD repeat G protein beta family. G proteins are composed of 3 units, alpha, beta and gamma.

Its function is as follows. Guanine nucleotide-binding proteins (G proteins) are involved as a modulator or transducer in various transmembrane signaling systems. The beta and gamma chains are required for the GTPase activity, for replacement of GDP by GTP, and for G protein-effector interaction. This Homarus americanus (American lobster) protein is Guanine nucleotide-binding protein G(I)/G(S)/G(T) subunit beta-1 (GBETA1).